Here is a 59-residue protein sequence, read N- to C-terminus: UPF0509 protein KPN78578_12530 (59 aa).

This sequence belongs to the UPF0509 family.

The protein is UPF0509 protein KPN78578_12530 of Klebsiella pneumoniae subsp. pneumoniae (strain ATCC 700721 / MGH 78578).